Reading from the N-terminus, the 98-residue chain is Putative pterin-4-alpha-carbinolamine dehydratase (98 aa).

This sequence belongs to the pterin-4-alpha-carbinolamine dehydratase family.

It carries out the reaction (4aS,6R)-4a-hydroxy-L-erythro-5,6,7,8-tetrahydrobiopterin = (6R)-L-erythro-6,7-dihydrobiopterin + H2O. This Parasynechococcus marenigrum (strain WH8102) protein is Putative pterin-4-alpha-carbinolamine dehydratase.